An 88-amino-acid chain; its full sequence is Large ribosomal subunit protein bL27 (88 aa).

Belongs to the bacterial ribosomal protein bL27 family.

This chain is Large ribosomal subunit protein bL27, found in Acidobacterium capsulatum (strain ATCC 51196 / DSM 11244 / BCRC 80197 / JCM 7670 / NBRC 15755 / NCIMB 13165 / 161).